We begin with the raw amino-acid sequence, 771 residues long: Post-GPI attachment to proteins factor 6 (771 aa).

The first 34 residues, 1 to 34 (MGRAGTGTGGEAVAAVVAGPLLLLLLARPPPASA), serve as a signal peptide directing secretion. The Extracellular portion of the chain corresponds to 35–545 (GYSGKSEVGL…STAQTVAQQR (511 aa)). N-linked (GlcNAc...) asparagine glycosylation is present at N144. Positions 322-343 (FNASSGLLSPSPDHQDLGRSGR) are disordered. Over residues 334–343 (DHQDLGRSGR) the composition is skewed to basic and acidic residues. N407 and N431 each carry an N-linked (GlcNAc...) asparagine glycan. One can recognise an EGF-like domain in the interval 497–533 (PCLNDCGPYGQCLLLRRHSYLYASCSCKAGWRGWSCT). Cystine bridges form between C498-C508, C502-C521, and C523-C532. The helical transmembrane segment at 546–566 (AATLLLTLSNLMFLAPIAVSV) threads the bilayer. The Cytoplasmic segment spans residues 567–568 (RR). The chain crosses the membrane as a helical span at residues 569–589 (FFLVEASVYAYTMFFSTFYHA). The Extracellular segment spans residues 590–605 (CDQPGEAVLCILSYDT). The chain crosses the membrane as a helical span at residues 606-626 (LQYCDFLGSGAAIWVTILCMA). Residues 627–629 (RLK) are Cytoplasmic-facing. Residues 630-650 (TVLKYVLFLLGTLVIAMSLQL) form a helical membrane-spanning segment. Residues 651–653 (DRR) lie on the Extracellular side of the membrane. A helical transmembrane segment spans residues 654–674 (GMWNMLGPCLFAFVIMASMWA). Residues 675-690 (YRCGHRRQCYPTSWQR) are Cytoplasmic-facing. A helical transmembrane segment spans residues 691-711 (WAFYLLPGVSMASVGIAIYTS). Residues 712–717 (MMTSDN) are Extracellular-facing. The chain crosses the membrane as a helical span at residues 718–738 (YYYTHSIWHILLAGSAALLLP). Topologically, residues 739 to 771 (PPDQPAEPWACSQKFPCHYQICKNDREELYAVT) are cytoplasmic.

Belongs to the TMEM8 family. Glycosylated. Expressed in pancreas, placenta, spleen, liver, kidney, bone marrow, peripheral blood leukocytes and tonsil.

The protein localises to the cell membrane. The protein resides in the lysosome membrane. It catalyses the reaction a 1,2-diacyl-sn-glycero-3-phosphocholine + H2O = a 1-acyl-sn-glycero-3-phosphocholine + a fatty acid + H(+). Its function is as follows. Involved in the lipid remodeling steps of GPI-anchor maturation. Lipid remodeling steps consist in the generation of 2 saturated fatty chains at the sn-2 position of GPI-anchor proteins (GPI-AP). Has phospholipase A2 activity that removes an acyl-chain at the sn-2 position of GPI-anchors during the remodeling of GPI. Required for the shedding of the GPI-AP CRIPTO, but not CFC1, at the cell surface. Shedding of CRIPTO modulates Nodal signaling by allowing soluble CRIPTO to act as a Nodal coreceptor on other cells. Also indirectly involved in the translocation of RAC1 from the cytosol to the plasma membrane by maintaining the steady state amount of CAV1-enriched plasma membrane subdomains, stabilizing RAC1 at the plasma membrane. In contrast to myomaker (TMEM8C), has no fusogenic activity. The protein is Post-GPI attachment to proteins factor 6 of Homo sapiens (Human).